Here is a 470-residue protein sequence, read N- to C-terminus: Poly(A) polymerase catalytic subunit (470 aa).

Catalysis depends on residues aspartate 192 and aspartate 194.

Belongs to the poxviridae poly(A) polymerase catalytic subunit family. In terms of assembly, heterodimer of a large (catalytic) subunit and a small (regulatory) subunit.

The enzyme catalyses RNA(n) + ATP = RNA(n)-3'-adenine ribonucleotide + diphosphate. In terms of biological role, polymerase that creates the 3'-poly(A) tail of mRNA's. In Odocoileus hemionus (Mule deer), this protein is Poly(A) polymerase catalytic subunit (PAPL).